The sequence spans 461 residues: ERBB receptor feedback inhibitor 1 (461 aa).

Residue Ser-2 is modified to N-acetylserine. Phosphothreonine occurs at positions 126 and 130. The disordered stretch occupies residues 228-353 (QNRVVPDPNP…VMPPTQSFAP (126 aa)). Phosphoserine is present on residues Ser-251 and Ser-272. Residues 265 to 274 (SSCTHRASPS) are compositionally biased toward polar residues. Over residues 283 to 292 (PPRVPIPPRP) the composition is skewed to pro residues. Ser-301 bears the Phosphoserine mark. The span at 311–324 (DEDRPPKVPPREPL) shows a compositional bias: basic and acidic residues. The span at 325–336 (SRSNSRTPSPKS) shows a compositional bias: polar residues. The tract at residues 333–362 (SPKSLPSYLNGVMPPTQSFAPDPKYVSSKA) is interaction with EGFR and ERBB2 and regulation of EGFR activation. Ser-460 is subject to Phosphoserine.

The protein belongs to the MIG6 family. Interacts with EGFR. Interacts with ERBB2. As to expression, detected in lung, in airway epithelial cells and alveolar type 2 cells (at protein level). Detected in uterus stroma, luminal epithelium and glandular epithelium.

The protein resides in the cytoplasm. It is found in the cell membrane. The protein localises to the nucleus. Functionally, negative regulator of EGFR signaling in skin morphogenesis. Acts as a negative regulator for several EGFR family members, including ERBB2, ERBB3 and ERBB4. Inhibits EGFR catalytic activity by interfering with its dimerization. Inhibits autophosphorylation of EGFR, ERBB2 and ERBB4. Important for normal keratinocyte proliferation and differentiation. Plays a role in modulating the response to steroid hormones in the uterus. Required for normal response to progesterone in the uterus and for fertility. Mediates epithelial estrogen responses in the uterus by regulating ESR1 levels and activation. Important for regulation of endometrium cell proliferation. Important for normal prenatal and perinatal lung development. This is ERBB receptor feedback inhibitor 1 (Errfi1) from Mus musculus (Mouse).